A 301-amino-acid polypeptide reads, in one-letter code: Probable tRNA pseudouridine synthase B (301 aa).

The Nucleophile role is filled by Asp-54. In terms of domain architecture, PUA spans 227–301 (LPRLTIADSA…VVVALERVLV (75 aa)).

This sequence belongs to the pseudouridine synthase TruB family. Type 2 subfamily.

The enzyme catalyses uridine(55) in tRNA = pseudouridine(55) in tRNA. Its function is as follows. Could be responsible for synthesis of pseudouridine from uracil-55 in the psi GC loop of transfer RNAs. The sequence is that of Probable tRNA pseudouridine synthase B from Halobacterium salinarum (strain ATCC 29341 / DSM 671 / R1).